Reading from the N-terminus, the 297-residue chain is GTPase Era (297 aa).

The region spanning 7–174 is the Era-type G domain; that stretch reads HSGFVSIIGR…VQVVRDLLPE (168 aa). The tract at residues 15–22 is G1; it reads GRPNVGKS. 15–22 lines the GTP pocket; sequence GRPNVGKS. Residues 41-45 form a G2 region; the sequence is QTTRN. The G3 stretch occupies residues 62–65; sequence DTPG. GTP-binding positions include 62-66 and 124-127; these read DTPGI and NKVD. Residues 124–127 are G4; that stretch reads NKVD. The G5 stretch occupies residues 153–155; the sequence is VSA. In terms of domain architecture, KH type-2 spans 205–282; the sequence is THDEVPYSVA…FLELFVRVSR (78 aa).

It belongs to the TRAFAC class TrmE-Era-EngA-EngB-Septin-like GTPase superfamily. Era GTPase family. As to quaternary structure, monomer.

The protein localises to the cytoplasm. Its subcellular location is the cell inner membrane. An essential GTPase that binds both GDP and GTP, with rapid nucleotide exchange. Plays a role in 16S rRNA processing and 30S ribosomal subunit biogenesis and possibly also in cell cycle regulation and energy metabolism. The polypeptide is GTPase Era (Geotalea daltonii (strain DSM 22248 / JCM 15807 / FRC-32) (Geobacter daltonii)).